We begin with the raw amino-acid sequence, 720 residues long: Zinc finger protein 408 (720 aa).

Residues 201–350 (VQQEVASPGE…GPAGSSPKQG (150 aa)) form a disordered region. A compositionally biased stretch (polar residues) spans 275–285 (LQSNSATQQDP). Low complexity predominate over residues 287–296 (GSGASFSSSA). At T322 the chain carries Phosphothreonine. 10 C2H2-type zinc fingers span residues 353–375 (YRCG…AFVH), 381–403 (FLCT…MLGH), 409–431 (FPCP…QVVH), 437–459 (FACD…RKTH), 468–490 (CPCP…MRLH), 496–518 (FLCP…LRLH), 524–546 (YRCP…LISH), 551–573 (HLCP…ERLH), 579–601 (FPCP…LKSH), and 607–629 (YRCP…QLSH).

Highest expression is observed in adult retina; abundantly expressed in the fetal eye. In the retina, it is detected in the outer nuclear layer, especially cone and rod photoreceptor cells, ganglion cell layer and both outer and inner plexiform layers (at protein level). Expressed in retinal blood vessels (at protein level).

It localises to the nucleus. Its function is as follows. May be involved in transcriptional regulation. The protein is Zinc finger protein 408 (ZNF408) of Homo sapiens (Human).